Consider the following 517-residue polypeptide: Ribonuclease Y (517 aa).

The helical transmembrane segment at M1–V21 threads the bilayer. One can recognise a KH domain in the interval L207–D273. Positions A333 to A426 constitute an HD domain.

This sequence belongs to the RNase Y family.

The protein resides in the cell membrane. Its function is as follows. Endoribonuclease that initiates mRNA decay. The protein is Ribonuclease Y of Campylobacter jejuni subsp. jejuni serotype O:23/36 (strain 81-176).